Here is a 93-residue protein sequence, read N- to C-terminus: Large ribosomal subunit protein uL23cz/uL23cy (93 aa).

It belongs to the universal ribosomal protein uL23 family. In terms of assembly, part of the 50S ribosomal subunit.

It is found in the plastid. The protein resides in the chloroplast. In terms of biological role, binds to 23S rRNA. The protein is Large ribosomal subunit protein uL23cz/uL23cy (rpl23-A) of Citrus sinensis (Sweet orange).